Here is a 61-residue protein sequence, read N- to C-terminus: Putative antitoxin VapB13 (61 aa).

It belongs to the UPF0165 family.

Functionally, possibly the antitoxin component of a type II toxin-antitoxin (TA) system. Its cognate toxin is VapC13 (Potential). The sequence is that of Putative antitoxin VapB13 (vapB13) from Archaeoglobus fulgidus (strain ATCC 49558 / DSM 4304 / JCM 9628 / NBRC 100126 / VC-16).